The chain runs to 314 residues: Dihydropteroate synthase (314 aa).

The 285-residue stretch at 10-294 (TVICGIINVT…DVASHRMAVE (285 aa)) folds into the Pterin-binding domain. Residue N17 participates in Mg(2+) binding. (7,8-dihydropterin-6-yl)methyl diphosphate contacts are provided by residues D91, N110, D201, K237, and 282–284 (RVH).

The protein belongs to the DHPS family. Homodimer. Requires Mg(2+) as cofactor.

It carries out the reaction (7,8-dihydropterin-6-yl)methyl diphosphate + 4-aminobenzoate = 7,8-dihydropteroate + diphosphate. Its pathway is cofactor biosynthesis; tetrahydrofolate biosynthesis; 7,8-dihydrofolate from 2-amino-4-hydroxy-6-hydroxymethyl-7,8-dihydropteridine diphosphate and 4-aminobenzoate: step 1/2. Is potently inhibited by sulfonamides, with Ki values between 25 nM and 850 nM. Catalyzes the condensation of para-aminobenzoate (pABA) with 6-hydroxymethyl-7,8-dihydropterin diphosphate (DHPt-PP) to form 7,8-dihydropteroate, the immediate precursor of folate derivatives. Functionally, is the target for the sulfonamide group of antimicrobial drugs. Sulfonamide drugs act as pABA analogs, they inhibit the reaction by acting as alternative substrates, leading to a 'dead end' sulfa-pterin product. This chain is Dihydropteroate synthase (sulA), found in Streptococcus pneumoniae (strain ATCC BAA-255 / R6).